The primary structure comprises 200 residues: ATP-dependent Clp protease proteolytic subunit (200 aa).

Ser101 serves as the catalytic Nucleophile. His126 is an active-site residue.

The protein belongs to the peptidase S14 family. Component of the chloroplastic Clp protease core complex.

It localises to the plastid. The protein resides in the chloroplast stroma. It catalyses the reaction Hydrolysis of proteins to small peptides in the presence of ATP and magnesium. alpha-casein is the usual test substrate. In the absence of ATP, only oligopeptides shorter than five residues are hydrolyzed (such as succinyl-Leu-Tyr-|-NHMec, and Leu-Tyr-Leu-|-Tyr-Trp, in which cleavage of the -Tyr-|-Leu- and -Tyr-|-Trp bonds also occurs).. Its function is as follows. Cleaves peptides in various proteins in a process that requires ATP hydrolysis. Has a chymotrypsin-like activity. Plays a major role in the degradation of misfolded proteins. The polypeptide is ATP-dependent Clp protease proteolytic subunit (Ostreococcus tauri).